We begin with the raw amino-acid sequence, 563 residues long: Grainyhead-like protein 1 homolog (563 aa).

The Grh/CP2 DB domain occupies 194–428 (NNLGFQYVLE…ELDKPAALFI (235 aa)). 2 interaction with DNA regions span residues 326–335 (TDFSTQKGVK) and 372–375 (RKLR). The interval 377 to 405 (EDKRAQKRKVQEYTAGALPGGRKKSDGEY) is disordered.

The protein belongs to the grh/CP2 family. Grainyhead subfamily.

It localises to the nucleus. Probable transcription factor. Binds a motif with the core sequence 5'-C[ACT][TG]G-3' in regulatory elements of target genes. Many putative target genes show oscillating expression levels, perhaps as a result of rhythmic variation in accumulation of grh-1. Plays a role in proper cuticle formation and/or barrier function and is required repetitively during development, for successful completion of each molt. Involved in modulating lifespan. Plays a role in defense response to bacteria. May act upstream of the p38 MAP kinase / pmk-1 pathway. May act downstream of the insulin/IGF-1 receptor signaling (IIS) pathway. This is Grainyhead-like protein 1 homolog from Caenorhabditis elegans.